The chain runs to 161 residues: Large ribosomal subunit protein uL15 (161 aa).

The segment at 1–43 (MKLSEISDNPGARKKRMRIGRGIGSGKGKTGGRGGKGQTARSG) is disordered. Positions 21–37 (RGIGSGKGKTGGRGGKG) are enriched in gly residues.

Belongs to the universal ribosomal protein uL15 family. In terms of assembly, part of the 50S ribosomal subunit.

Functionally, binds to the 23S rRNA. The protein is Large ribosomal subunit protein uL15 of Rhodopseudomonas palustris (strain BisB5).